Consider the following 197-residue polypeptide: Interleukin-17C (197 aa).

Residues 1–18 form the signal peptide; the sequence is MTLLPGLLFLTWLHTCLA. 2 cysteine pairs are disulfide-bonded: Cys129–Cys189 and Cys134–Cys191.

It belongs to the IL-17 family. In terms of assembly, binds to a heterodimer formed by IL17RA and IL17RE.

It is found in the secreted. In terms of biological role, cytokine that plays a crucial role in innate immunity of the epithelium, including to intestinal bacterial pathogens, in an autocrine manner. Stimulates the production of antibacterial peptides and pro-inflammatory molecules for host defense by signaling through the NF-kappa-B and MAPK pathways. Acts synergically with IL22 in inducing the expression of antibacterial peptides, including S100A8, S100A9, REG3A and REG3G. Synergy is also observed with TNF and IL1B in inducing DEFB2 from keratinocytes. Depending on the type of insult, may have both protective and pathogenic properties, either by maintaining epithelial homeostasis after an inflammatory challenge or by promoting inflammatory phenotype. Enhanced IL17C/IL17RE signaling may also lead to greater susceptibility to autoimmune diseases. This Homo sapiens (Human) protein is Interleukin-17C (IL17C).